The chain runs to 543 residues: Thiamine transport system permease protein ThiP (543 aa).

The next 12 membrane-spanning stretches (helical) occupy residues 19-39 (VAGGLALAFLATLAGGALLAL), 64-84 (FTIWQAVASSLLSVLFAIPIA), 102-122 (LFALPLALPALVAVLGVTSIY), 142-162 (DIYGIAGILIAHIFFNMPLAV), 205-225 (GMIGLVFMLCVTSFTTVLTLG), 250-270 (AVALTFTQLALTLLILLILRL), 300-320 (IIVIALGFLYVALPIAGVVVS), 343-363 (LALGFSAALLAVFLSLALVAA), 379-399 (GASLILVMPPIVIGAGWFILL), 406-426 (FVMAPLMVVTVNAAMAMPFAV), 468-488 (GMAFAFAMALSLGDLGTIALF), and 510-530 (FDAAGLALILGVLCLALMMIA). Residues 62–266 (ARFTIWQAVA…QLALTLLILL (205 aa)) form the ABC transmembrane type-1 1 domain. Residues 339–530 (IATSLALGFS…VLCLALMMIA (192 aa)) enclose the ABC transmembrane type-1 2 domain.

This sequence belongs to the binding-protein-dependent transport system permease family. CysTW subfamily. In terms of assembly, the complex is composed of two ATP-binding proteins (ThiQ), two transmembrane proteins (ThiP) and a solute-binding protein (ThiB).

The protein localises to the cell inner membrane. Part of the ABC transporter complex ThiBPQ involved in thiamine import. Probably responsible for the translocation of the substrate across the membrane. The protein is Thiamine transport system permease protein ThiP (thiP) of Brucella abortus (strain 2308).